A 310-amino-acid chain; its full sequence is Pantothenate kinase (310 aa).

95 to 102 (GSVAVGKS) lines the ATP pocket.

It belongs to the prokaryotic pantothenate kinase family.

It is found in the cytoplasm. It carries out the reaction (R)-pantothenate + ATP = (R)-4'-phosphopantothenate + ADP + H(+). It participates in cofactor biosynthesis; coenzyme A biosynthesis; CoA from (R)-pantothenate: step 1/5. In Rhodococcus erythropolis (strain PR4 / NBRC 100887), this protein is Pantothenate kinase.